We begin with the raw amino-acid sequence, 465 residues long: Argininosuccinate lyase (465 aa).

It belongs to the lyase 1 family. Argininosuccinate lyase subfamily.

It localises to the cytoplasm. The catalysed reaction is 2-(N(omega)-L-arginino)succinate = fumarate + L-arginine. Its pathway is amino-acid biosynthesis; L-arginine biosynthesis; L-arginine from L-ornithine and carbamoyl phosphate: step 3/3. The chain is Argininosuccinate lyase from Desulfatibacillum aliphaticivorans.